A 105-amino-acid polypeptide reads, in one-letter code: UPF0145 protein OEOE_0637 (105 aa).

Belongs to the UPF0145 family.

The sequence is that of UPF0145 protein OEOE_0637 from Oenococcus oeni (strain ATCC BAA-331 / PSU-1).